A 168-amino-acid chain; its full sequence is NADH-quinone oxidoreductase subunit I (168 aa).

4Fe-4S ferredoxin-type domains are found at residues 58-88 (LRTY…IEAQ) and 99-128 (VRYD…EGPN). Residues Cys-68, Cys-71, Cys-74, Cys-78, Cys-108, Cys-111, Cys-114, and Cys-118 each coordinate [4Fe-4S] cluster.

The protein belongs to the complex I 23 kDa subunit family. As to quaternary structure, NDH-1 is composed of 14 different subunits. Subunits NuoA, H, J, K, L, M, N constitute the membrane sector of the complex. The cofactor is [4Fe-4S] cluster.

Its subcellular location is the cell inner membrane. The catalysed reaction is a quinone + NADH + 5 H(+)(in) = a quinol + NAD(+) + 4 H(+)(out). In terms of biological role, NDH-1 shuttles electrons from NADH, via FMN and iron-sulfur (Fe-S) centers, to quinones in the respiratory chain. The immediate electron acceptor for the enzyme in this species is believed to be ubiquinone. Couples the redox reaction to proton translocation (for every two electrons transferred, four hydrogen ions are translocated across the cytoplasmic membrane), and thus conserves the redox energy in a proton gradient. The polypeptide is NADH-quinone oxidoreductase subunit I (Ehrlichia ruminantium (strain Gardel)).